A 178-amino-acid chain; its full sequence is Large ribosomal subunit protein uL6 (178 aa).

It belongs to the universal ribosomal protein uL6 family. In terms of assembly, part of the 50S ribosomal subunit.

Its function is as follows. This protein binds to the 23S rRNA, and is important in its secondary structure. It is located near the subunit interface in the base of the L7/L12 stalk, and near the tRNA binding site of the peptidyltransferase center. In Streptococcus thermophilus (strain CNRZ 1066), this protein is Large ribosomal subunit protein uL6.